Here is a 430-residue protein sequence, read N- to C-terminus: Serine--tRNA ligase (430 aa).

237–239 is a binding site for L-serine; that stretch reads TAE. 268–270 contributes to the ATP binding site; the sequence is RAE. Glutamate 291 is an L-serine binding site. An ATP-binding site is contributed by 355–358; that stretch reads EVSS. Serine 391 is a binding site for L-serine.

This sequence belongs to the class-II aminoacyl-tRNA synthetase family. Type-1 seryl-tRNA synthetase subfamily. Homodimer. The tRNA molecule binds across the dimer.

The protein localises to the cytoplasm. It catalyses the reaction tRNA(Ser) + L-serine + ATP = L-seryl-tRNA(Ser) + AMP + diphosphate + H(+). The enzyme catalyses tRNA(Sec) + L-serine + ATP = L-seryl-tRNA(Sec) + AMP + diphosphate + H(+). It participates in aminoacyl-tRNA biosynthesis; selenocysteinyl-tRNA(Sec) biosynthesis; L-seryl-tRNA(Sec) from L-serine and tRNA(Sec): step 1/1. Catalyzes the attachment of serine to tRNA(Ser). Is also able to aminoacylate tRNA(Sec) with serine, to form the misacylated tRNA L-seryl-tRNA(Sec), which will be further converted into selenocysteinyl-tRNA(Sec). The polypeptide is Serine--tRNA ligase (Baumannia cicadellinicola subsp. Homalodisca coagulata).